The sequence spans 660 residues: uncharacterized protein (660 aa).

The tract at residues 220 to 239 is disordered; sequence ADARGQAAAPPQAQAPAPPD. Over residues 222–239 the composition is skewed to low complexity; sequence ARGQAAAPPQAQAPAPPD.

This is an uncharacterized protein from Callospermophilus lateralis (Golden-mantled ground squirrel).